Here is a 1123-residue protein sequence, read N- to C-terminus: Phytochrome A (1123 aa).

Positions 1-14 are enriched in low complexity; sequence MSSSRPSQSSTTSS. A disordered region spans residues 1–20; it reads MSSSRPSQSSTTSSRSKHSA. A GAF domain is found at 218-401; sequence SMERLCDTMV…VFAILVNKEL (184 aa). A phytochromobilin-binding site is contributed by Cys323. One can recognise a PAS 1 domain in the interval 617 to 687; the sequence is VTAEMVRLIE…KMLELALQGQ (71 aa). A PAC domain is found at 690-746; it reads RNVEFEIKTHGPSRDSSPISLIVNACASKDVRDSVVGVCFIAQDITGQKSIMDKFTR. In terms of domain architecture, PAS 2 spans 747 to 821; it reads IEGDYRAIIQ…KNQEAFVNFG (75 aa). The 218-residue stretch at 901 to 1118 folds into the Histidine kinase domain; it reads YIRRQIRNPL…TFIISVELAV (218 aa).

Belongs to the phytochrome family. Homodimer. Contains one covalently linked phytochromobilin chromophore.

Its function is as follows. Regulatory photoreceptor which exists in two forms that are reversibly interconvertible by light: the Pr form that absorbs maximally in the red region of the spectrum and the Pfr form that absorbs maximally in the far-red region. Photoconversion of Pr to Pfr induces an array of morphogenic responses, whereas reconversion of Pfr to Pr cancels the induction of those responses. Pfr controls the expression of a number of nuclear genes including those encoding the small subunit of ribulose-bisphosphate carboxylase, chlorophyll A/B binding protein, protochlorophyllide reductase, rRNA, etc. It also controls the expression of its own gene(s) in a negative feedback fashion. This is Phytochrome A (PHYA) from Solanum tuberosum (Potato).